The following is a 185-amino-acid chain: Ribosome-recycling factor (185 aa).

The protein belongs to the RRF family.

Its subcellular location is the cytoplasm. In terms of biological role, responsible for the release of ribosomes from messenger RNA at the termination of protein biosynthesis. May increase the efficiency of translation by recycling ribosomes from one round of translation to another. This chain is Ribosome-recycling factor, found in Xylella fastidiosa (strain Temecula1 / ATCC 700964).